Reading from the N-terminus, the 396-residue chain is Acetate kinase (396 aa).

Asparagine 8 is a Mg(2+) binding site. ATP is bound at residue lysine 15. Arginine 89 serves as a coordination point for substrate. Aspartate 146 functions as the Proton donor/acceptor in the catalytic mechanism. ATP is bound by residues 206–210 (HIGNG), 283–285 (DMR), and 331–335 (GVGEN). A Mg(2+)-binding site is contributed by glutamate 383.

Belongs to the acetokinase family. As to quaternary structure, homodimer. Mg(2+) is required as a cofactor. The cofactor is Mn(2+).

It is found in the cytoplasm. The catalysed reaction is acetate + ATP = acetyl phosphate + ADP. Its pathway is metabolic intermediate biosynthesis; acetyl-CoA biosynthesis; acetyl-CoA from acetate: step 1/2. Its function is as follows. Catalyzes the formation of acetyl phosphate from acetate and ATP. Can also catalyze the reverse reaction. This chain is Acetate kinase, found in Streptococcus pneumoniae (strain Hungary19A-6).